A 139-amino-acid chain; its full sequence is Putative pre-16S rRNA nuclease (139 aa).

The protein belongs to the YqgF nuclease family.

Its subcellular location is the cytoplasm. Could be a nuclease involved in processing of the 5'-end of pre-16S rRNA. In Phocaeicola vulgatus (strain ATCC 8482 / DSM 1447 / JCM 5826 / CCUG 4940 / NBRC 14291 / NCTC 11154) (Bacteroides vulgatus), this protein is Putative pre-16S rRNA nuclease.